Here is a 429-residue protein sequence, read N- to C-terminus: Small ribosomal subunit protein uS5m (429 aa).

The interval 108–127 is disordered; that stretch reads AGAKKGRGKRTKKKKRKDLN. The span at 111-125 shows a compositional bias: basic residues; the sequence is KKGRGKRTKKKKRKD. Residues 218 to 282 form the S5 DRBM domain; the sequence is FDTRILEVRN…NRAVHHLYYI (65 aa).

The protein belongs to the universal ribosomal protein uS5 family. As to quaternary structure, component of the mitochondrial ribosome small subunit (28S) which comprises a 12S rRNA and about 30 distinct proteins.

The protein resides in the mitochondrion. This is Small ribosomal subunit protein uS5m (MRPS5) from Pongo abelii (Sumatran orangutan).